A 213-amino-acid chain; its full sequence is Orotate phosphoribosyltransferase (213 aa).

A 5-phospho-alpha-D-ribose 1-diphosphate-binding site is contributed by lysine 26. Orotate is bound at residue 34 to 35 (FF). 5-phospho-alpha-D-ribose 1-diphosphate contacts are provided by residues 72-73 (YK), arginine 99, lysine 100, lysine 103, histidine 105, and 124-132 (DDVITAGTS). Residues threonine 128 and arginine 156 each coordinate orotate.

This sequence belongs to the purine/pyrimidine phosphoribosyltransferase family. PyrE subfamily. Homodimer. Mg(2+) serves as cofactor.

The enzyme catalyses orotidine 5'-phosphate + diphosphate = orotate + 5-phospho-alpha-D-ribose 1-diphosphate. It functions in the pathway pyrimidine metabolism; UMP biosynthesis via de novo pathway; UMP from orotate: step 1/2. Its function is as follows. Catalyzes the transfer of a ribosyl phosphate group from 5-phosphoribose 1-diphosphate to orotate, leading to the formation of orotidine monophosphate (OMP). The chain is Orotate phosphoribosyltransferase from Methylococcus capsulatus (strain ATCC 33009 / NCIMB 11132 / Bath).